The sequence spans 350 residues: MTDIKSLNYDELVTYMAGLGEKKFRAGQLYQWMHEKLADSFDECTNLSNALRQKLKETSEYVCLEPVRVQHSKLDGTEKYLFRLSDGNYVESVLMKYHHGNSVCISSQVGCRMGCRFCASTLNGKVRDLRPSEMLDQIYRIQKITGERVSNVVVMGSGEPMDNYDNLIKFIELLNDERGLNISQRNITVSSCGIVPKLKELADLKLQITLAISLHAPNDELRKTMMPIANKYSIEEIMDVCRYYIECTGRRISFEYSLVKGVNDSMECAKQLIELVKGMNCHINLIPVNPIKERDYKQTGKEEVYAFKNKLEKNGINVTIRREMGRDIDGACGQLRNKYMEDIDESDGGY.

The active-site Proton acceptor is the E91. Residues 97 to 327 (YHHGNSVCIS…VTIRREMGRD (231 aa)) enclose the Radical SAM core domain. C104 and C332 form a disulfide bridge. Residues C111, C115, and C118 each contribute to the [4Fe-4S] cluster site. S-adenosyl-L-methionine contacts are provided by residues 158-159 (GE), S190, 213-215 (SLH), and N289. The S-methylcysteine intermediate role is filled by C332.

Belongs to the radical SAM superfamily. RlmN family. [4Fe-4S] cluster serves as cofactor.

The protein resides in the cytoplasm. The catalysed reaction is adenosine(2503) in 23S rRNA + 2 reduced [2Fe-2S]-[ferredoxin] + 2 S-adenosyl-L-methionine = 2-methyladenosine(2503) in 23S rRNA + 5'-deoxyadenosine + L-methionine + 2 oxidized [2Fe-2S]-[ferredoxin] + S-adenosyl-L-homocysteine. The enzyme catalyses adenosine(37) in tRNA + 2 reduced [2Fe-2S]-[ferredoxin] + 2 S-adenosyl-L-methionine = 2-methyladenosine(37) in tRNA + 5'-deoxyadenosine + L-methionine + 2 oxidized [2Fe-2S]-[ferredoxin] + S-adenosyl-L-homocysteine. Functionally, specifically methylates position 2 of adenine 2503 in 23S rRNA and position 2 of adenine 37 in tRNAs. This chain is Probable dual-specificity RNA methyltransferase RlmN, found in Lachnospira eligens (strain ATCC 27750 / DSM 3376 / VPI C15-48 / C15-B4) (Eubacterium eligens).